We begin with the raw amino-acid sequence, 447 residues long: Methylenetetrahydrofolate--tRNA-(uracil-5-)-methyltransferase TrmFO (447 aa).

10-15 (GAGLAG) is an FAD binding site.

This sequence belongs to the MnmG family. TrmFO subfamily. FAD serves as cofactor.

The protein localises to the cytoplasm. The enzyme catalyses uridine(54) in tRNA + (6R)-5,10-methylene-5,6,7,8-tetrahydrofolate + NADH + H(+) = 5-methyluridine(54) in tRNA + (6S)-5,6,7,8-tetrahydrofolate + NAD(+). It carries out the reaction uridine(54) in tRNA + (6R)-5,10-methylene-5,6,7,8-tetrahydrofolate + NADPH + H(+) = 5-methyluridine(54) in tRNA + (6S)-5,6,7,8-tetrahydrofolate + NADP(+). Its function is as follows. Catalyzes the folate-dependent formation of 5-methyl-uridine at position 54 (M-5-U54) in all tRNAs. The sequence is that of Methylenetetrahydrofolate--tRNA-(uracil-5-)-methyltransferase TrmFO from Lactococcus lactis subsp. lactis (strain IL1403) (Streptococcus lactis).